A 247-amino-acid polypeptide reads, in one-letter code: ATP synthase subunit a, chloroplastic (247 aa).

5 helical membrane passes run Q38 to V58, V95 to L115, I134 to T154, L199 to L219, and G220 to G240.

This sequence belongs to the ATPase A chain family. F-type ATPases have 2 components, CF(1) - the catalytic core - and CF(0) - the membrane proton channel. CF(1) has five subunits: alpha(3), beta(3), gamma(1), delta(1), epsilon(1). CF(0) has four main subunits: a, b, b' and c.

It is found in the plastid. The protein resides in the chloroplast thylakoid membrane. In terms of biological role, key component of the proton channel; it plays a direct role in the translocation of protons across the membrane. This Solanum lycopersicum (Tomato) protein is ATP synthase subunit a, chloroplastic.